Reading from the N-terminus, the 90-residue chain is Carboxysome shell vertex protein CsoS4A (90 aa).

The region spanning 1–78 (MKIYKVDKTL…SDLTIVGIID (78 aa)) is the BMV domain.

The protein belongs to the CcmL/EutN family. CsoS4 subfamily. In terms of assembly, homopentamer.

The protein resides in the carboxysome. Probably forms vertices in the carboxysome, a polyhedral inclusion where RuBisCO (ribulose bisphosphate carboxylase, cbbL-cbbS) is sequestered. Has been modeled to induce curvature upon insertion into an otherwise flat hexagonal layer of major carboxysome subunits. The chain is Carboxysome shell vertex protein CsoS4A from Hydrogenovibrio crunogenus (strain DSM 25203 / XCL-2) (Thiomicrospira crunogena).